A 122-amino-acid chain; its full sequence is uncharacterized protein (122 aa).

A run of 2 helical transmembrane segments spans residues 43 to 63 and 76 to 96; these read PIII…IFFI and AVAD…ILYF.

It localises to the membrane. This is an uncharacterized protein from Schizosaccharomyces pombe (strain 972 / ATCC 24843) (Fission yeast).